Consider the following 268-residue polypeptide: Tryptophan synthase alpha chain (268 aa).

Active-site proton acceptor residues include Glu49 and Asp60.

This sequence belongs to the TrpA family. Tetramer of two alpha and two beta chains.

It catalyses the reaction (1S,2R)-1-C-(indol-3-yl)glycerol 3-phosphate + L-serine = D-glyceraldehyde 3-phosphate + L-tryptophan + H2O. The protein operates within amino-acid biosynthesis; L-tryptophan biosynthesis; L-tryptophan from chorismate: step 5/5. Its function is as follows. The alpha subunit is responsible for the aldol cleavage of indoleglycerol phosphate to indole and glyceraldehyde 3-phosphate. The protein is Tryptophan synthase alpha chain of Salmonella choleraesuis (strain SC-B67).